A 315-amino-acid polypeptide reads, in one-letter code: Aspartate carbamoyltransferase catalytic subunit (315 aa).

Carbamoyl phosphate is bound by residues Arg-55 and Thr-56. Lys-83 lines the L-aspartate pocket. 3 residues coordinate carbamoyl phosphate: Arg-105, His-138, and Gln-141. The L-aspartate site is built by Arg-171 and Arg-225. 2 residues coordinate carbamoyl phosphate: Gly-266 and Pro-267.

The protein belongs to the aspartate/ornithine carbamoyltransferase superfamily. ATCase family. Heterododecamer (2C3:3R2) of six catalytic PyrB chains organized as two trimers (C3), and six regulatory PyrI chains organized as three dimers (R2).

The enzyme catalyses carbamoyl phosphate + L-aspartate = N-carbamoyl-L-aspartate + phosphate + H(+). Its pathway is pyrimidine metabolism; UMP biosynthesis via de novo pathway; (S)-dihydroorotate from bicarbonate: step 2/3. In terms of biological role, catalyzes the condensation of carbamoyl phosphate and aspartate to form carbamoyl aspartate and inorganic phosphate, the committed step in the de novo pyrimidine nucleotide biosynthesis pathway. The protein is Aspartate carbamoyltransferase catalytic subunit of Mycolicibacterium vanbaalenii (strain DSM 7251 / JCM 13017 / BCRC 16820 / KCTC 9966 / NRRL B-24157 / PYR-1) (Mycobacterium vanbaalenii).